Here is a 214-residue protein sequence, read N- to C-terminus: tRNA (guanine-N(7)-)-methyltransferase (214 aa).

S-adenosyl-L-methionine-binding residues include glutamate 43, glutamate 68, asparagine 99, and aspartate 121. The active site involves aspartate 121. Substrate is bound by residues lysine 125, aspartate 157, and 194–197; that span reads TEYE.

This sequence belongs to the class I-like SAM-binding methyltransferase superfamily. TrmB family.

It carries out the reaction guanosine(46) in tRNA + S-adenosyl-L-methionine = N(7)-methylguanosine(46) in tRNA + S-adenosyl-L-homocysteine. The protein operates within tRNA modification; N(7)-methylguanine-tRNA biosynthesis. Catalyzes the formation of N(7)-methylguanine at position 46 (m7G46) in tRNA. The protein is tRNA (guanine-N(7)-)-methyltransferase of Alkaliphilus metalliredigens (strain QYMF).